We begin with the raw amino-acid sequence, 152 residues long: Deoxyuridine 5'-triphosphate nucleotidohydrolase (152 aa).

Substrate contacts are provided by residues 71-73, N84, 88-90, and M98; these read RSG and LID.

The protein belongs to the dUTPase family. The cofactor is Mg(2+).

The enzyme catalyses dUTP + H2O = dUMP + diphosphate + H(+). Its pathway is pyrimidine metabolism; dUMP biosynthesis; dUMP from dCTP (dUTP route): step 2/2. This enzyme is involved in nucleotide metabolism: it produces dUMP, the immediate precursor of thymidine nucleotides and it decreases the intracellular concentration of dUTP so that uracil cannot be incorporated into DNA. The chain is Deoxyuridine 5'-triphosphate nucleotidohydrolase from Shewanella putrefaciens (strain CN-32 / ATCC BAA-453).